A 653-amino-acid chain; its full sequence is Rab proteins geranylgeranyltransferase component A 1 (653 aa).

A disordered region spans residues 606–653; sequence PPPPNPEDIILDGDSLQPEASESSAIPEANSETFKESTNLGNLEESSE. The span at 623–646 shows a compositional bias: polar residues; that stretch reads PEASESSAIPEANSETFKESTNLG.

The protein belongs to the Rab GDI family. Monomer. Heterotrimer composed of RABGGTA, RABGGTB and CHM; within this trimer, RABGGTA and RABGGTB form the catalytic component B, while CHM (component A) mediates Rab protein binding. Can associate with the Rab GGTase dimer (RGGT or component B) prior to Rab protein binding; the association is stabilized by geranylgeranyl pyrophosphate (GGpp). The CHM:RGGT:Rab complex is destabilized by GGpp. Interacts with RAB1A, RAB1B, RAB5A, RAB7A and RAB27A and mediates their prenylation. Interacts with the non-phosphorylated forms of RAB3A, RAB3B, RAB3C, RAB3D, RAB5B, RAB5C, RAB8A, RAB8B, RAB10, RAB12, RAB35, and RAB43.

Its subcellular location is the cytoplasm. It is found in the cytosol. Its function is as follows. Substrate-binding subunit of the Rab geranylgeranyltransferase (GGTase) complex. Binds unprenylated Rab proteins and presents the substrate peptide to the catalytic component B composed of RABGGTA and RABGGTB, and remains bound to it after the geranylgeranyl transfer reaction. The component A is thought to be regenerated by transferring its prenylated Rab back to the donor membrane. Besides, a pre-formed complex consisting of CHM and the Rab GGTase dimer (RGGT or component B) can bind to and prenylate Rab proteins; this alternative pathway is proposed to be the predominant pathway for Rab protein geranylgeranylation. The chain is Rab proteins geranylgeranyltransferase component A 1 (CHM) from Homo sapiens (Human).